We begin with the raw amino-acid sequence, 479 residues long: Aspartyl/glutamyl-tRNA(Asn/Gln) amidotransferase subunit B (479 aa).

It belongs to the GatB/GatE family. GatB subfamily. Heterotrimer of A, B and C subunits.

It catalyses the reaction L-glutamyl-tRNA(Gln) + L-glutamine + ATP + H2O = L-glutaminyl-tRNA(Gln) + L-glutamate + ADP + phosphate + H(+). The enzyme catalyses L-aspartyl-tRNA(Asn) + L-glutamine + ATP + H2O = L-asparaginyl-tRNA(Asn) + L-glutamate + ADP + phosphate + 2 H(+). Its function is as follows. Allows the formation of correctly charged Asn-tRNA(Asn) or Gln-tRNA(Gln) through the transamidation of misacylated Asp-tRNA(Asn) or Glu-tRNA(Gln) in organisms which lack either or both of asparaginyl-tRNA or glutaminyl-tRNA synthetases. The reaction takes place in the presence of glutamine and ATP through an activated phospho-Asp-tRNA(Asn) or phospho-Glu-tRNA(Gln). The sequence is that of Aspartyl/glutamyl-tRNA(Asn/Gln) amidotransferase subunit B from Streptococcus pyogenes serotype M6 (strain ATCC BAA-946 / MGAS10394).